A 286-amino-acid chain; its full sequence is ATP synthase gamma chain (286 aa).

This sequence belongs to the ATPase gamma chain family. In terms of assembly, F-type ATPases have 2 components, CF(1) - the catalytic core - and CF(0) - the membrane proton channel. CF(1) has five subunits: alpha(3), beta(3), gamma(1), delta(1), epsilon(1). CF(0) has three main subunits: a, b and c.

The protein resides in the cell inner membrane. In terms of biological role, produces ATP from ADP in the presence of a proton gradient across the membrane. The gamma chain is believed to be important in regulating ATPase activity and the flow of protons through the CF(0) complex. The polypeptide is ATP synthase gamma chain (Pseudomonas putida (strain W619)).